Here is a 329-residue protein sequence, read N- to C-terminus: Vacuolar protein sorting-associated protein 26B-like (329 aa).

This sequence belongs to the VPS26 family.

The protein resides in the cytoplasm. The protein localises to the membrane. Its function is as follows. Probable component of the retromer complex, a complex required to retrieve lysosomal enzyme receptors (IGF2R and M6PR) from endosomes to the trans-Golgi network. The chain is Vacuolar protein sorting-associated protein 26B-like (vps26bl) from Danio rerio (Zebrafish).